We begin with the raw amino-acid sequence, 247 residues long: Putative 2-succinyl-6-hydroxy-2,4-cyclohexadiene-1-carboxylate synthase (247 aa).

The AB hydrolase-1 domain maps to 4 to 229 (IIFLHGLLGT…CAGHNSHLEN (226 aa)).

It belongs to the AB hydrolase superfamily. MenH family. As to quaternary structure, monomer.

It catalyses the reaction 5-enolpyruvoyl-6-hydroxy-2-succinyl-cyclohex-3-ene-1-carboxylate = (1R,6R)-6-hydroxy-2-succinyl-cyclohexa-2,4-diene-1-carboxylate + pyruvate. The protein operates within quinol/quinone metabolism; 1,4-dihydroxy-2-naphthoate biosynthesis; 1,4-dihydroxy-2-naphthoate from chorismate: step 3/7. It functions in the pathway quinol/quinone metabolism; menaquinone biosynthesis. Its function is as follows. Catalyzes a proton abstraction reaction that results in 2,5-elimination of pyruvate from 2-succinyl-5-enolpyruvyl-6-hydroxy-3-cyclohexene-1-carboxylate (SEPHCHC) and the formation of 2-succinyl-6-hydroxy-2,4-cyclohexadiene-1-carboxylate (SHCHC). The protein is Putative 2-succinyl-6-hydroxy-2,4-cyclohexadiene-1-carboxylate synthase of Haemophilus influenzae (strain ATCC 51907 / DSM 11121 / KW20 / Rd).